Reading from the N-terminus, the 506-residue chain is Glutamate--tRNA ligase (506 aa).

The 'HIGH' region motif lies at 23-33 (PSPTGTPHVGL). Positions 267 to 271 (KLSKR) match the 'KMSKS' region motif. Lys270 lines the ATP pocket.

It belongs to the class-I aminoacyl-tRNA synthetase family. Glutamate--tRNA ligase type 1 subfamily. As to quaternary structure, monomer.

Its subcellular location is the cytoplasm. It carries out the reaction tRNA(Glu) + L-glutamate + ATP = L-glutamyl-tRNA(Glu) + AMP + diphosphate. Its function is as follows. Catalyzes the attachment of glutamate to tRNA(Glu) in a two-step reaction: glutamate is first activated by ATP to form Glu-AMP and then transferred to the acceptor end of tRNA(Glu). The protein is Glutamate--tRNA ligase of Clavibacter sepedonicus (Clavibacter michiganensis subsp. sepedonicus).